A 934-amino-acid polypeptide reads, in one-letter code: Glycine dehydrogenase (decarboxylating) (934 aa).

Residue Lys687 is modified to N6-(pyridoxal phosphate)lysine.

This sequence belongs to the GcvP family. The glycine cleavage system is composed of four proteins: P, T, L and H. The cofactor is pyridoxal 5'-phosphate.

It catalyses the reaction N(6)-[(R)-lipoyl]-L-lysyl-[glycine-cleavage complex H protein] + glycine + H(+) = N(6)-[(R)-S(8)-aminomethyldihydrolipoyl]-L-lysyl-[glycine-cleavage complex H protein] + CO2. Functionally, the glycine cleavage system catalyzes the degradation of glycine. The P protein binds the alpha-amino group of glycine through its pyridoxal phosphate cofactor; CO(2) is released and the remaining methylamine moiety is then transferred to the lipoamide cofactor of the H protein. The sequence is that of Glycine dehydrogenase (decarboxylating) from Nocardia farcinica (strain IFM 10152).